The following is a 378-amino-acid chain: MLNDSVIDIAKQLINRRSVTPEDAGCQEAMCEFLGALGFDNETMVFEDTTNLWSRRGKEGPVFCFAGHTDVVPSGPEDAWKTPPFTATEVNGYLHGRGAADMKGSLAAMLVATREFVNQYPQHKGSIAYLITSDEEGPFINGTTRVIDTLEARNEKIDWCIVGEPSSTDEVGDIVKNGRRGSLTGDLVVKGVQGHVAYPHLAKNPVHSAMAALDELAKSHWDNGNDFFPPTSFQISNIHAGTGAGNVIPGELHVCFNFRFSTEVTDQILIERVTTILDAHELDYDIKWTFNGQPFLTDTGALLDATQGAIEAVKGTPTVLSTAGGTSDGRFIAPTGAQVIELGPVNATIHKIDECVKMADLEQLADMYFGILERLLAN.

His-68 serves as a coordination point for Zn(2+). The active site involves Asp-70. Asp-101 lines the Zn(2+) pocket. Glu-135 functions as the Proton acceptor in the catalytic mechanism. Zn(2+)-binding residues include Glu-136, Glu-164, and His-350.

It belongs to the peptidase M20A family. DapE subfamily. In terms of assembly, homodimer. It depends on Zn(2+) as a cofactor. The cofactor is Co(2+).

The catalysed reaction is N-succinyl-(2S,6S)-2,6-diaminopimelate + H2O = (2S,6S)-2,6-diaminopimelate + succinate. The protein operates within amino-acid biosynthesis; L-lysine biosynthesis via DAP pathway; LL-2,6-diaminopimelate from (S)-tetrahydrodipicolinate (succinylase route): step 3/3. Its function is as follows. Catalyzes the hydrolysis of N-succinyl-L,L-diaminopimelic acid (SDAP), forming succinate and LL-2,6-diaminopimelate (DAP), an intermediate involved in the bacterial biosynthesis of lysine and meso-diaminopimelic acid, an essential component of bacterial cell walls. This is Succinyl-diaminopimelate desuccinylase 2 from Alteromonas mediterranea (strain DSM 17117 / CIP 110805 / LMG 28347 / Deep ecotype).